The sequence spans 762 residues: Alpha-xylosidase XylQ (762 aa).

D414 (nucleophile) is an active-site residue. E417 is an active-site residue.

Belongs to the glycosyl hydrolase 31 family.

The protein localises to the cell membrane. The enzyme catalyses Hydrolysis of terminal, non-reducing alpha-D-xylose residues with release of alpha-D-xylose.. Its function is as follows. Involved in the metabolism of isoprimeverose. Hydrolyzes isoprimeverose into equimolar amounts of glucose and xylose. In vitro, can also use p-nitrophenyl-alpha-D-xylopyranoside (alpha-p-NPX). The chain is Alpha-xylosidase XylQ from Lactiplantibacillus pentosus (Lactobacillus pentosus).